The following is a 250-amino-acid chain: Carboxy-S-adenosyl-L-methionine synthase (250 aa).

S-adenosyl-L-methionine is bound by residues Tyr-45, 70-72 (GCS), 95-96 (DN), 123-124 (DI), Asn-138, and Arg-205.

This sequence belongs to the class I-like SAM-binding methyltransferase superfamily. Cx-SAM synthase family. In terms of assembly, homodimer.

It carries out the reaction prephenate + S-adenosyl-L-methionine = carboxy-S-adenosyl-L-methionine + 3-phenylpyruvate + H2O. Its function is as follows. Catalyzes the conversion of S-adenosyl-L-methionine (SAM) to carboxy-S-adenosyl-L-methionine (Cx-SAM). The protein is Carboxy-S-adenosyl-L-methionine synthase of Marinobacter nauticus (strain ATCC 700491 / DSM 11845 / VT8) (Marinobacter aquaeolei).